Here is a 61-residue protein sequence, read N- to C-terminus: Photosystem II reaction center protein Z (61 aa).

A run of 2 helical transmembrane segments spans residues 5-25 (LTAL…VALA) and 38-58 (NKAF…DGIS).

Belongs to the PsbZ family. PSII is composed of 1 copy each of membrane proteins PsbA, PsbB, PsbC, PsbD, PsbE, PsbF, PsbH, PsbI, PsbJ, PsbK, PsbL, PsbM, PsbT, PsbX, PsbY, PsbZ, Psb30/Ycf12, at least 3 peripheral proteins of the oxygen-evolving complex and a large number of cofactors. It forms dimeric complexes.

Its subcellular location is the plastid. The protein localises to the chloroplast thylakoid membrane. In terms of biological role, may control the interaction of photosystem II (PSII) cores with the light-harvesting antenna, regulates electron flow through the 2 photosystem reaction centers. PSII is a light-driven water plastoquinone oxidoreductase, using light energy to abstract electrons from H(2)O, generating a proton gradient subsequently used for ATP formation. The protein is Photosystem II reaction center protein Z of Skeletonema costatum (Marine centric diatom).